Consider the following 669-residue polypeptide: DNA ligase (669 aa).

NAD(+)-binding positions include 33 to 37 (DLTYD), 82 to 83 (SL), and E115. The active-site N6-AMP-lysine intermediate is the K117. R138, E172, K286, and K310 together coordinate NAD(+). Positions 401, 404, 417, and 422 each coordinate Zn(2+).

It belongs to the NAD-dependent DNA ligase family. LigA subfamily. Mg(2+) is required as a cofactor. It depends on Mn(2+) as a cofactor.

The catalysed reaction is NAD(+) + (deoxyribonucleotide)n-3'-hydroxyl + 5'-phospho-(deoxyribonucleotide)m = (deoxyribonucleotide)n+m + AMP + beta-nicotinamide D-nucleotide.. Its function is as follows. DNA ligase that catalyzes the formation of phosphodiester linkages between 5'-phosphoryl and 3'-hydroxyl groups in double-stranded DNA using NAD as a coenzyme and as the energy source for the reaction. It is essential for DNA replication and repair of damaged DNA. This is DNA ligase from Borrelia hermsii (strain HS1 / DAH).